Here is a 293-residue protein sequence, read N- to C-terminus: Sec-independent protein translocase protein TatC (293 aa).

Helical transmembrane passes span 35 to 55 (AAIATIIAAIIGTVFLYQPFI), 87 to 107 (LLKVGMYIGLVIASPVWLYQA), 123 to 143 (LFGFLTASIFAFACGVAISYF), 173 to 193 (ILKFVVTFSCAFIIPVILVGI), 204 to 224 (ILKSWRWVVVLVAVIAALTAP), and 228 to 248 (IMMMFVLMAPLLIFFFAAIGI).

The protein belongs to the TatC family. The Tat system comprises two distinct complexes: a TatABC complex, containing multiple copies of TatA, TatB and TatC subunits, and a separate TatA complex, containing only TatA subunits. Substrates initially bind to the TatABC complex, which probably triggers association of the separate TatA complex to form the active translocon.

The protein resides in the cell membrane. Functionally, part of the twin-arginine translocation (Tat) system that transports large folded proteins containing a characteristic twin-arginine motif in their signal peptide across membranes. Together with TatB, TatC is part of a receptor directly interacting with Tat signal peptides. This chain is Sec-independent protein translocase protein TatC, found in Rothia mucilaginosa (strain DY-18) (Stomatococcus mucilaginosus).